Here is a 450-residue protein sequence, read N- to C-terminus: UPF0210 protein CPF_1748 (450 aa).

The protein belongs to the UPF0210 family. As to quaternary structure, homodimer.

This chain is UPF0210 protein CPF_1748, found in Clostridium perfringens (strain ATCC 13124 / DSM 756 / JCM 1290 / NCIMB 6125 / NCTC 8237 / Type A).